We begin with the raw amino-acid sequence, 179 residues long: Methylated-DNA--protein-cysteine methyltransferase (179 aa).

The Nucleophile; methyl group acceptor role is filled by C130.

This sequence belongs to the MGMT family.

The protein localises to the cytoplasm. It carries out the reaction a 6-O-methyl-2'-deoxyguanosine in DNA + L-cysteinyl-[protein] = S-methyl-L-cysteinyl-[protein] + a 2'-deoxyguanosine in DNA. The enzyme catalyses a 4-O-methyl-thymidine in DNA + L-cysteinyl-[protein] = a thymidine in DNA + S-methyl-L-cysteinyl-[protein]. Involved in the cellular defense against the biological effects of O6-methylguanine (O6-MeG) and O4-methylthymine (O4-MeT) in DNA. Repairs the methylated nucleobase in DNA by stoichiometrically transferring the methyl group to a cysteine residue in the enzyme. This is a suicide reaction: the enzyme is irreversibly inactivated. The protein is Methylated-DNA--protein-cysteine methyltransferase of Haemophilus influenzae (strain ATCC 51907 / DSM 11121 / KW20 / Rd).